The primary structure comprises 310 residues: D-apiose import binding protein (310 aa).

The first 21 residues, 1–21 (MKLLKASLVALSLAASTFVYA), serve as a signal peptide directing secretion. Residues Asn-35, 111–112 (DR), 158–160 (DTN), Arg-164, Asn-214, Asp-239, and Gln-260 each bind D-apiofuranose.

Belongs to the bacterial solute-binding protein 2 family.

It is found in the periplasm. In terms of biological role, part of an ABC transporter complex involved in D-apiose import. Binds D-apiose, D-ribose and D-ribulose. The sequence is that of D-apiose import binding protein from Actinobacillus succinogenes (strain ATCC 55618 / DSM 22257 / CCUG 43843 / 130Z).